Reading from the N-terminus, the 147-residue chain is Lysozyme C-1 (147 aa).

The first 18 residues, 1-18, serve as a signal peptide directing secretion; it reads MKALIILGLLCLSVAVQG. Residues 19–147 enclose the C-type lysozyme domain; sequence KVFERCELAR…VSSYVEGCSL (129 aa). 4 disulfides stabilise this stretch: C24/C145, C48/C133, C83/C99, and C95/C113. Active-site residues include E53 and D71.

This sequence belongs to the glycosyl hydrolase 22 family. As to quaternary structure, monomer. Expressed in stomach.

It is found in the secreted. It carries out the reaction Hydrolysis of (1-&gt;4)-beta-linkages between N-acetylmuramic acid and N-acetyl-D-glucosamine residues in a peptidoglycan and between N-acetyl-D-glucosamine residues in chitodextrins.. In terms of biological role, lysozymes have primarily a bacteriolytic function; those in tissues and body fluids are associated with the monocyte-macrophage system and enhance the activity of immunoagents. This is Lysozyme C-1 from Ovis aries (Sheep).